The sequence spans 255 residues: High-affinity branched-chain amino acid transport ATP-binding protein LivG (255 aa).

The 249-residue stretch at L6–E254 folds into the ABC transporter domain. G38–T45 lines the ATP pocket.

Belongs to the ABC transporter superfamily.

Component of the high-affinity branched-chain amino acid transport system. The sequence is that of High-affinity branched-chain amino acid transport ATP-binding protein LivG (livG) from Salmonella typhi.